We begin with the raw amino-acid sequence, 289 residues long: Cell division protein ZipA (289 aa).

Position 1 (M1) is a topological domain, periplasmic. A helical transmembrane segment spans residues 2 to 22 (DIGLREWLIVIGLIVIAGILF). At 23–289 (DGWRRMRGGK…HERRSLMQKR (267 aa)) the chain is on the cytoplasmic side. The interval 65 to 141 (HREPSFDEQD…KEREKAPAVA (77 aa)) is disordered. Positions 81-99 (RETKERKGGKRQEEPRQGD) are enriched in basic and acidic residues. The segment covering 100-114 (LDLDEGLALEADPSD) has biased composition (acidic residues).

The protein belongs to the ZipA family. Interacts with FtsZ via their C-terminal domains.

The protein localises to the cell inner membrane. Its function is as follows. Essential cell division protein that stabilizes the FtsZ protofilaments by cross-linking them and that serves as a cytoplasmic membrane anchor for the Z ring. Also required for the recruitment to the septal ring of downstream cell division proteins. The protein is Cell division protein ZipA of Pseudomonas aeruginosa (strain UCBPP-PA14).